We begin with the raw amino-acid sequence, 242 residues long: Type III pantothenate kinase (242 aa).

7 to 14 (DLGNSRFK) is a binding site for ATP. Residues Tyr-91 and 98 to 101 (GVDR) each bind substrate. Asp-100 serves as the catalytic Proton acceptor. Thr-121 contributes to the ATP binding site. Thr-171 is a substrate binding site.

This sequence belongs to the type III pantothenate kinase family. In terms of assembly, homodimer. NH4(+) is required as a cofactor. The cofactor is K(+).

The protein resides in the cytoplasm. It catalyses the reaction (R)-pantothenate + ATP = (R)-4'-phosphopantothenate + ADP + H(+). Its pathway is cofactor biosynthesis; coenzyme A biosynthesis; CoA from (R)-pantothenate: step 1/5. Its function is as follows. Catalyzes the phosphorylation of pantothenate (Pan), the first step in CoA biosynthesis. The protein is Type III pantothenate kinase of Xanthomonas campestris pv. campestris (strain B100).